The following is a 1033-amino-acid chain: SIT4-associating protein SAP190 (1033 aa).

4 disordered regions span residues 32–82, 147–213, 768–813, and 828–1033; these read DQDD…TTES, PEII…QVET, FGND…HDSG, and ENEE…KEAF. A compositionally biased stretch (basic and acidic residues) spans 158-170; that stretch reads ILIERDRKDKKED. The segment covering 171-182 has biased composition (acidic residues); the sequence is AEEGGDSEETTN. Residues 183–195 show a composition bias toward basic and acidic residues; the sequence is DSDHDSGDERSVD. At S774 the chain carries Phosphoserine. 2 stretches are compositionally biased toward acidic residues: residues 784 to 793 and 828 to 838; these read SEDIIGDTEG and ENEEDYAEYSD. Phosphoserine occurs at positions 857, 862, and 892. Residues 858 to 879 are compositionally biased toward basic and acidic residues; sequence DDGKSKSAESEFTDKISEHRDG. Polar residues predominate over residues 909-924; that stretch reads SRSQPSDPKLQDQNIF. Positions 932 to 944 are enriched in acidic residues; sequence GVGDDDDYMDPND. T990 carries the phosphothreonine modification. S991 is modified (phosphoserine). The span at 1000 to 1018 shows a compositional bias: acidic residues; sequence ISSDEEDSEDEDEENDMGN.

The protein belongs to the SAPS family. As to quaternary structure, associates with the SIT4 protein phosphatase catalytic subunit in a cell-cycle-dependent manner. Hyperphosphorylated in the absence of SIT4.

The protein resides in the cytoplasm. Functionally, positive regulator of protein phosphatase SIT4. Involved in the general amino acid control (GAAC) response regulated by TOR. Involved in the dephosphorylation of the elongator complex subunit IKI3. The protein is SIT4-associating protein SAP190 (SAP190) of Saccharomyces cerevisiae (strain AWRI1631) (Baker's yeast).